The sequence spans 419 residues: eIF5-mimic protein 2 (419 aa).

N-acetylmethionine is present on Met1. Positions Met1 to Arg15 are enriched in polar residues. A disordered region spans residues Met1 to Arg26. Ser12 carries the post-translational modification Phosphoserine. The W2 domain maps to Asn247–Glu414. Lys368 is covalently cross-linked (Glycyl lysine isopeptide (Lys-Gly) (interchain with G-Cter in SUMO2)). Residues Ser411 and Ser413 each carry the phosphoserine modification.

The protein belongs to the BZW family.

Translation initiation regulator which represses repeat-associated non-AUG (RAN) initiated translation probably by acting as a competitive inhibitor of eukaryotic translation initiation factor 5 (EIF5) function. Enhances histone H4 gene transcription but does not seem to bind DNA directly. In Pongo abelii (Sumatran orangutan), this protein is eIF5-mimic protein 2 (BZW1).